Reading from the N-terminus, the 75-residue chain is U6-lycotoxin-Ls1f (75 aa).

The first 21 residues, 1–21 (MKLLLFTALVLVVISLVEVEA), serve as a signal peptide directing secretion. Residues 22-25 (ENER) constitute a propeptide that is removed on maturation.

This sequence belongs to the neurotoxin 19 (CSTX) family. 06 (U6-Lctx) subfamily. In terms of processing, contains 4 disulfide bonds. In terms of tissue distribution, expressed by the venom gland.

It localises to the secreted. The chain is U6-lycotoxin-Ls1f from Lycosa singoriensis (Wolf spider).